We begin with the raw amino-acid sequence, 334 residues long: Serine racemase (334 aa).

Glu13 contacts Mg(2+). ATP contacts are provided by Ser31, Ser32, Ile33, Lys51, and Thr52. Catalysis depends on proton acceptor residues Lys56 and Ser84. An N6-(pyridoxal phosphate)lysine modification is found at Lys56. Position 86 (Asn86) interacts with pyridoxal 5'-phosphate. Gln89 contributes to the ATP binding site. Cys113 carries the post-translational modification S-nitrosocysteine. Tyr121 lines the ATP pocket. Residue Asn154 participates in pyridoxal 5'-phosphate binding. A Mg(2+)-binding site is contributed by Asp178. Residues Gly185, Gly186, Gly187, Gly188, and Met189 each contribute to the pyridoxal 5'-phosphate site. 4 residues coordinate Mg(2+): Glu210, Ala214, Asp216, and Asn247. Ca(2+) is bound by residues Glu210, Ala214, Asp216, and Asn247. Residues Glu210, Ala214, and Asp216 each coordinate Mn(2+). Lys279 lines the ATP pocket. Ser313 is a pyridoxal 5'-phosphate binding site. Asn316 is an ATP binding site.

It belongs to the serine/threonine dehydratase family. Homodimer. Mg(2+) is required as a cofactor. Requires Mn(2+) as cofactor. It depends on Ca(2+) as a cofactor. The cofactor is pyridoxal 5'-phosphate. S-nitrosylated, leading to decrease the enzyme activity.

The enzyme catalyses L-serine = D-serine. The catalysed reaction is L-serine = pyruvate + NH4(+). It catalyses the reaction D-serine = pyruvate + NH4(+). Its function is as follows. Catalyzes the synthesis of D-serine from L-serine. D-serine is a key coagonist with glutamate at NMDA receptors. Has dehydratase activity towards both L-serine and D-serine. In Bos taurus (Bovine), this protein is Serine racemase (SRR).